Here is a 396-residue protein sequence, read N- to C-terminus: 4-hydroxy-3-methylbut-2-en-1-yl diphosphate synthase (ferredoxin) (396 aa).

Residues cysteine 305, cysteine 308, cysteine 339, and glutamate 346 each contribute to the [4Fe-4S] cluster site.

It belongs to the IspG family. [4Fe-4S] cluster serves as cofactor.

It catalyses the reaction (2E)-4-hydroxy-3-methylbut-2-enyl diphosphate + 2 oxidized [2Fe-2S]-[ferredoxin] + H2O = 2-C-methyl-D-erythritol 2,4-cyclic diphosphate + 2 reduced [2Fe-2S]-[ferredoxin] + H(+). It functions in the pathway isoprenoid biosynthesis; isopentenyl diphosphate biosynthesis via DXP pathway; isopentenyl diphosphate from 1-deoxy-D-xylulose 5-phosphate: step 5/6. Converts 2C-methyl-D-erythritol 2,4-cyclodiphosphate (ME-2,4cPP) into 1-hydroxy-2-methyl-2-(E)-butenyl 4-diphosphate. This is 4-hydroxy-3-methylbut-2-en-1-yl diphosphate synthase (ferredoxin) from Gloeobacter violaceus (strain ATCC 29082 / PCC 7421).